The following is a 549-amino-acid chain: Cytoplasmic trehalase (549 aa).

Residues Arg168, 175-176 (WD), Asn212, 221-223 (RSQ), 292-294 (RDE), and Gly324 contribute to the substrate site. Active-site proton donor/acceptor residues include Asp326 and Glu509. Residue Glu525 participates in substrate binding.

The protein belongs to the glycosyl hydrolase 37 family. Monomer.

The protein resides in the cytoplasm. The enzyme catalyses alpha,alpha-trehalose + H2O = alpha-D-glucose + beta-D-glucose. Its pathway is glycan degradation; trehalose degradation; D-glucose from alpha,alpha-trehalose: step 1/1. In terms of biological role, hydrolyzes trehalose to glucose. Could be involved, in cells returning to low osmolarity conditions, in the utilization of the accumulated cytoplasmic trehalose, which was synthesized in response to high osmolarity. The sequence is that of Cytoplasmic trehalase from Escherichia coli O127:H6 (strain E2348/69 / EPEC).